Consider the following 321-residue polypeptide: G-protein coupled receptor aex-2 (321 aa).

Residues 1-24 (MNSTDIIANVTKPFVENLTLGETA) lie on the Extracellular side of the membrane. 3 N-linked (GlcNAc...) asparagine glycosylation sites follow: asparagine 2, asparagine 9, and asparagine 17. The chain crosses the membrane as a helical span at residues 25–45 (FYISCGIVGTVFNALVLWIAL). Over 46–55 (TYINTEDKPR) the chain is Cytoplasmic. A helical transmembrane segment spans residues 56 to 76 (QIIVINMTVADLLMCIVYMKT). The Extracellular portion of the chain corresponds to 77 to 90 (RPWLSHFNLWLCHP). Residues cysteine 88 and cysteine 161 are joined by a disulfide bond. Residues 91-111 (YYVIIWTCQMCSCLNLVWLNV) traverse the membrane as a helical segment. At 112-132 (DKLIYIQFPLHYYQIVNRKRL) the chain is on the cytoplasmic side. A helical transmembrane segment spans residues 133 to 153 (LWITAATWGGLYAMNIALVTF). Residues 154–175 (LKITRGSCLGVSLNPYVYLLSP) are Extracellular-facing. Residues 176 to 196 (IFYVVMILTSFSLSALIYCIA) traverse the membrane as a helical segment. Over 197 to 221 (HNLTHMEERQRSKLFRRLFFLFSST) the chain is Cytoplasmic. The helical transmembrane segment at 222–242 (LWTFFTCLPYRLLYLFSIFCG) threads the bilayer. Topologically, residues 243 to 254 (ETCQINNYYKTA) are extracellular. Residues 255–275 (TNLFFRLLIVGIMINPVITIW) traverse the membrane as a helical segment. At 276 to 321 (TQRIYRLRLMRMFGRLRENSSTEVLMVSNRRASERPPEHTPLRCDM) the chain is on the cytoplasmic side.

It belongs to the G-protein coupled receptor 1 family. As to expression, expressed in the intestinal muscle, anal depressor, AVL and DVB GABAergic neurons, enteric muscles, the nerve ring, the ventral nerve cord and head mesodermal cells.

The protein resides in the cell membrane. Its subcellular location is the cell projection. It localises to the cilium. In terms of biological role, G-protein coupled receptor for the nlp-40 neuropeptide. The activity of this receptor is mediated by G proteins which activate adenylyl cyclase. Plays a role in the defecation motor program, which is a coordinated series of three muscle contractions that occurs every 45 seconds. Specifically, acts in GABAergic neurons, such as AVL and DVB, to control the expulsion step of defecation. Required for fatty acid uptake and metabolism by intestinal cells and therefore regulates the levels of triglycerides in the intestine. This Caenorhabditis elegans protein is G-protein coupled receptor aex-2.